A 238-amino-acid polypeptide reads, in one-letter code: 15,16-dihydrobiliverdin:ferredoxin oxidoreductase (238 aa).

The protein belongs to the HY2 family.

The enzyme catalyses 15,16-dihydrobiliverdin + oxidized 2[4Fe-4S]-[ferredoxin] = biliverdin IXalpha + reduced 2[4Fe-4S]-[ferredoxin] + 2 H(+). Its function is as follows. Catalyzes the two-electron reduction of biliverdin IX-alpha at the C15 methine bridge. The sequence is that of 15,16-dihydrobiliverdin:ferredoxin oxidoreductase from Prochlorococcus marinus (strain NATL2A).